We begin with the raw amino-acid sequence, 351 residues long: Histidine protein kinase SaeS (351 aa).

2 helical membrane passes run 9–29 (IIIG…IAYI) and 40–60 (TLTL…SIFI). An HAMP domain is found at 61–114 (NPLIQKIKQFNIKTKQFANGNYASNDKTFNSPKEIYELNQSFNKMASEITQQMN). In terms of domain architecture, Histidine kinase spans 129–348 (NLAHDLKTPL…TMTVTLHKLD (220 aa)). His132 bears the Phosphohistidine; by autocatalysis mark.

In terms of processing, autophosphorylated.

It is found in the cell membrane. It catalyses the reaction ATP + protein L-histidine = ADP + protein N-phospho-L-histidine.. In terms of biological role, member of the two-component regulatory system SaeR/SaeS involved in the regulation of staphylococcal virulence factors in a strain-dependent fashion. Probably functions as a membrane-associated protein kinase that upon sensing the appropriate signal, autophosphorylates and in turn activates the cytosolic response regulator SaeR. The sequence is that of Histidine protein kinase SaeS (saeS) from Staphylococcus aureus (strain USA300).